The chain runs to 405 residues: Sialic acid transporter NanX (405 aa).

The Cytoplasmic segment spans residues 1–20 (MATAWYKQVNPPQRKALFSA). Residues 21–41 (WLGYVFDGFDFMMIFYILHII) traverse the membrane as a helical segment. Topologically, residues 42-53 (KADLGITDIQAT) are periplasmic. Residues 54-74 (LIGTVAFIARPIGGGFFGAMA) form a helical membrane-spanning segment. Residues 75 to 80 (DKYGRK) lie on the Cytoplasmic side of the membrane. A helical membrane pass occupies residues 81-101 (PMMMWAIFIYSVGTGLSGIAT). Position 102 (N102) is a topological domain, periplasmic. The chain crosses the membrane as a helical span at residues 103 to 123 (LYMLAVCRFIVGLGMSGEYAC). Residues 124–139 (ASTYAVESWPKNLQSK) lie on the Cytoplasmic side of the membrane. The chain crosses the membrane as a helical span at residues 140-160 (ASAFLVSGFSVGNIIAAQIIP). Topologically, residues 161 to 164 (QFAE) are periplasmic. A helical membrane pass occupies residues 165–185 (VYGWRNSFFIGLLPVLLVLWI). At 186-214 (RKSAPESQEWIEDKYKDKSTFLSVFRKPH) the chain is on the cytoplasmic side. Residues 215-235 (LSISMIVFLVCFCLFGANWPI) form a helical membrane-spanning segment. At 236 to 250 (NGLLPSYLADNGVNT) the chain is on the periplasmic side. The chain crosses the membrane as a helical span at residues 251-271 (VVISTLMTIAGLGTLTGTIFF). Over 272–282 (GFVGDKIGVKK) the chain is Cytoplasmic. Residues 283–303 (AFVVGLITSFIFLCPLFFISV) form a helical membrane-spanning segment. The Periplasmic segment spans residues 304–307 (KNSS). The helical transmembrane segment at 308–328 (LIGLCLFGLMFTNLGIAGLVP) threads the bilayer. Residues 329–344 (KFIYDYFPTKLRGLGT) are Cytoplasmic-facing. A helical membrane pass occupies residues 345 to 365 (GLIYNLGATGGMAAPVLATYI). Topologically, residues 366 to 371 (SGYYGL) are periplasmic. The helical transmembrane segment at 372-392 (GVSLFIVTVAFSALLILLVGF) threads the bilayer. At 393–405 (DIPGKIYKLSVAK) the chain is on the cytoplasmic side.

It belongs to the major facilitator superfamily. Sugar transporter (TC 2.A.1.1) family.

It is found in the cell inner membrane. Its function is as follows. Probably transports across the inner membrane the two dehydrated forms of N-acetylneuraminate (Neu5Ac), 2,7-anhydro-N-acetylneuraminate (2,7-AN) and 2-deoxy-2,3-didehydro-N-acetylneuraminate (2,3-EN). The polypeptide is Sialic acid transporter NanX (Escherichia coli (strain K12)).